The sequence spans 943 residues: Isoleucine--tRNA ligase (943 aa).

A 'HIGH' region motif is present at residues 58 to 68 (PYANGNIHIGH). E567 provides a ligand contact to L-isoleucyl-5'-AMP. The short motif at 608–612 (KMSKS) is the 'KMSKS' region element. K611 is a binding site for ATP. Zn(2+) contacts are provided by C906, C909, C926, and C929.

This sequence belongs to the class-I aminoacyl-tRNA synthetase family. IleS type 1 subfamily. As to quaternary structure, monomer. It depends on Zn(2+) as a cofactor.

It localises to the cytoplasm. It carries out the reaction tRNA(Ile) + L-isoleucine + ATP = L-isoleucyl-tRNA(Ile) + AMP + diphosphate. Its function is as follows. Catalyzes the attachment of isoleucine to tRNA(Ile). As IleRS can inadvertently accommodate and process structurally similar amino acids such as valine, to avoid such errors it has two additional distinct tRNA(Ile)-dependent editing activities. One activity is designated as 'pretransfer' editing and involves the hydrolysis of activated Val-AMP. The other activity is designated 'posttransfer' editing and involves deacylation of mischarged Val-tRNA(Ile). This is Isoleucine--tRNA ligase from Azotobacter vinelandii (strain DJ / ATCC BAA-1303).